The chain runs to 204 residues: MNTQPLRVGIGGPVGSGKTALTLALCLALRDRYNLAVVTNDIYTREDADFLVRNQALAPERIIGVETGGCPHTAIREDASINLEAVDQLNRRFPGLDLILVESGGDNLSATFSPELSDLTIYVIDVSAGDKLPRKGGPGICKSDLLVINKIDLAPLVGASLELMNSDTQRMRNGKPFVFSNQKTGVGLEEIVAFIERQGLLTAA.

Residue glycine 12 to threonine 19 coordinates GTP.

Belongs to the SIMIBI class G3E GTPase family. UreG subfamily. Homodimer. UreD, UreF and UreG form a complex that acts as a GTP-hydrolysis-dependent molecular chaperone, activating the urease apoprotein by helping to assemble the nickel containing metallocenter of UreC. The UreE protein probably delivers the nickel.

It is found in the cytoplasm. In terms of biological role, facilitates the functional incorporation of the urease nickel metallocenter. This process requires GTP hydrolysis, probably effectuated by UreG. This Pseudomonas fluorescens (strain SBW25) protein is Urease accessory protein UreG.